We begin with the raw amino-acid sequence, 217 residues long: Large ribosomal subunit protein uL1 (217 aa).

Belongs to the universal ribosomal protein uL1 family. In terms of assembly, part of the 50S ribosomal subunit.

Its function is as follows. Binds directly to 23S rRNA. Probably involved in E site tRNA release. Protein L1 is also a translational repressor protein, it controls the translation of its operon by binding to its mRNA. The sequence is that of Large ribosomal subunit protein uL1 from Aeropyrum pernix (strain ATCC 700893 / DSM 11879 / JCM 9820 / NBRC 100138 / K1).